We begin with the raw amino-acid sequence, 64 residues long: Beta-defensin 5 (64 aa).

Residues 1 to 22 (MRLHHLLLVLLFLVLSAGSGFT) form the signal peptide. Gln-23 is modified (pyrrolidone carboxylic acid). Disulfide bonds link Cys-31-Cys-60, Cys-38-Cys-53, and Cys-43-Cys-61.

Belongs to the beta-defensin family. Neutrophilic granules. Alveolar macrophages.

Its subcellular location is the secreted. In terms of biological role, has bactericidal activity. Active against E.coli ML35 but not against S.aureus 502A. In Bos taurus (Bovine), this protein is Beta-defensin 5 (DEFB5).